Reading from the N-terminus, the 219-residue chain is Cytidylate kinase (219 aa).

ATP is bound at residue 15–23 (GPAASGKGT).

It belongs to the cytidylate kinase family. Type 1 subfamily.

The protein resides in the cytoplasm. The enzyme catalyses CMP + ATP = CDP + ADP. The catalysed reaction is dCMP + ATP = dCDP + ADP. This is Cytidylate kinase from Brucella abortus (strain S19).